A 1044-amino-acid polypeptide reads, in one-letter code: Elongation factor 3A (1044 aa).

Ser2 carries the N-acetylserine modification. The stretch at 5–42 (QQSIKVLEELFQKLSVATADNRHEIASEVASFLNGNII) is one HEAT 1 repeat. Positions 42, 44, and 83 each coordinate ADP. HEAT repeat units follow at residues 86 to 123 (PYIVQLVPAICTNAGNKDKEIQSVASETLISIVNAVNP), 125 to 162 (AIKALLPHLTNAIVETNKWQEKIAILAAISAMVDAAKD), 166 to 203 (LRMPELIPVLSETMWDTKKEVKAAATAAMTKATETVDN), 205 to 241 (DIERFIPSLIQCIADPTEVPETVHLLGATTFVAEVTP), 242 to 279 (ATLSIMVPLLSRGLNERETGIKRKSAVIIDNMCKLVED), and 285 to 323 (PFLGKLLPGLKSNFATIADPEAREVTLRALKTLRRVGNV). 2 positions are modified to N6,N6,N6-trimethyllysine: Lys187 and Lys196. A Glycyl lysine isopeptide (Lys-Gly) (interchain with G-Cter in ubiquitin) cross-link involves residue Lys350. ADP-binding residues include Thr392, His396, and Glu397. Positions 426-641 (DEGEDLCNCE…CPAAKAYEEL (216 aa)) constitute an ABC transporter 1 domain. Lys636 participates in a covalent cross-link: Glycyl lysine isopeptide (Lys-Gly) (interchain with G-Cter in ubiquitin). Ser642 carries the post-translational modification Phosphoserine. In terms of domain architecture, ABC transporter 2 spans 667-993 (VKVTNMEFQY…AGPRIEKKED (327 aa)). Asn703 serves as a coordination point for ADP. At Lys789 the chain carries N6,N6,N6-trimethyllysine. The ADP site is built by Glu922, Asn925, and His951. Thr972 is modified (phosphothreonine). At Ser974 the chain carries Phosphoserine. Positions 974–1044 (SGHNWVSGQG…DAYVSSDEEF (71 aa)) are disordered. A compositionally biased stretch (basic residues) spans 1007-1031 (GGKKKKKLSSAELRKKKKERMKKKK). 2 positions are modified to phosphoserine: Ser1039 and Ser1040.

It belongs to the ABC transporter superfamily. ABCF family. EF3 subfamily. In terms of assembly, monomer. Interacts with elongation factor 1A (eEF1A). Interacts through its N-terminus with 18S rRNA. Associates with ribosomes; preferentially binds ribosomes in the post-translocational state (bearing a peptidyl-tRNA in the P-site) in the presence of ATP, suggesting that ATP hydrolysis is required for ribosome dissociation.

The protein localises to the cytoplasm. It is found in the cytosol. It catalyses the reaction ATP + H2O = ADP + phosphate + H(+). Its pathway is protein biosynthesis; polypeptide chain elongation. Inhibited by the translational inhibitors neomycin and alpha-sarcin, which suppress the ATPase activity. Its function is as follows. Ribosome-dependent ATPase that functions in cytoplasmic translation elongation. Required for the ATP-dependent release of deacylated tRNA from the ribosomal E-site during protein biosynthesis. Stimulates the eEF1A-dependent binding of aminoacyl-tRNA to the ribosomal A-site, which has reduced affinity for tRNA as long as the E-site is occupied. Assists translation termination by stimulating the release of nascent protein from the ribosome by release factors. In nutrient-replete conditions, occupies the space on the ribosome bound by GCN1 during amino acid starvation conditions, and therefore indirectly negatively regulates GCN2 kinase activity in replete conditions. The sequence is that of Elongation factor 3A (YEF3) from Saccharomyces cerevisiae (strain ATCC 204508 / S288c) (Baker's yeast).